The sequence spans 457 residues: Multidrug resistance protein MdtK (457 aa).

The next 12 helical transmembrane spans lie at 11 to 31, 53 to 73, 93 to 113, 127 to 147, 160 to 180, 189 to 209, 243 to 263, 276 to 296, 314 to 334, 350 to 370, 387 to 407, and 418 to 438; these read LLAL…MGFV, IWLP…PVIA, WLAG…GYII, AVGY…FQVA, GMVM…IFIY, GGVG…LAMV, LPIA…ALLV, IALN…AAVT, AART…IFTV, VVTL…SDSI, IFYI…YILA, and PAGF…MMML.

It belongs to the multi antimicrobial extrusion (MATE) (TC 2.A.66.1) family. MdtK subfamily.

It is found in the cell inner membrane. In terms of biological role, multidrug efflux pump that functions probably as a Na(+)/drug antiporter. This Escherichia coli O45:K1 (strain S88 / ExPEC) protein is Multidrug resistance protein MdtK.